The sequence spans 239 residues: MASTAVQLLGFLLSFLGMVGTLITTILPHWRRTAHVGTNILTAVSYLKGLWMECVWHSTGIYQCQIYRSLLALPRDLQAARALMVISCLLSGMACACAVVGMKCTRCAKGTPAKTTFAVLGGALFLLAGLLCMVAVSWTTNDVVQNFYNPLLPSGMKFEIGQALYLGFISSSLSLIGGTLLCLSCQDEAPYRPYPPQSRAGATTTATAPAYRPPAAYKDNRAPSVTSAAHSGYRLNDYV.

Topologically, residues M1–Q7 are cytoplasmic. The helical transmembrane segment at L8–P28 threads the bilayer. At H29–R81 the chain is on the extracellular side. The helical transmembrane segment at A82–M102 threads the bilayer. Residues K103–T115 lie on the Cytoplasmic side of the membrane. The chain crosses the membrane as a helical span at residues T116–V136. Topologically, residues S137–Q162 are extracellular. A helical transmembrane segment spans residues A163–L183. Topologically, residues S184–V239 are cytoplasmic.

The protein belongs to the claudin family. In terms of tissue distribution, expressed in all sensory epithelia of the inner ear vestibular organs, as well as in liver and kidney.

The protein localises to the cell junction. It localises to the tight junction. It is found in the cell membrane. Functionally, plays a major role in tight junction-specific obliteration of the intercellular space, through calcium-independent cell-adhesion activity. This chain is Claudin-14 (Cldn14), found in Mus musculus (Mouse).